The following is a 501-amino-acid chain: Nuclear receptor-binding protein 2 (501 aa).

The interval 1–33 (MAAPEPAPRRAREREREREDESEDESDILEESP) is disordered. A compositionally biased stretch (basic and acidic residues) spans 7–19 (APRRARERERERE). Residues 20-30 (DESEDESDILE) show a composition bias toward acidic residues. The 269-residue stretch at 38-306 (QKRREQVNQG…AHSLLFHRVL (269 aa)) folds into the Protein kinase domain. 2 positions are modified to phosphothreonine: Thr409 and Thr411.

The protein belongs to the protein kinase superfamily. Ser/Thr protein kinase family.

Its subcellular location is the cytoplasm. Its function is as follows. May regulate apoptosis of neural progenitor cells during their differentiation. This chain is Nuclear receptor-binding protein 2, found in Homo sapiens (Human).